Here is a 277-residue protein sequence, read N- to C-terminus: 2-dehydro-3-deoxyphosphooctonate aldolase (277 aa).

It belongs to the KdsA family.

It is found in the cytoplasm. The enzyme catalyses D-arabinose 5-phosphate + phosphoenolpyruvate + H2O = 3-deoxy-alpha-D-manno-2-octulosonate-8-phosphate + phosphate. It functions in the pathway carbohydrate biosynthesis; 3-deoxy-D-manno-octulosonate biosynthesis; 3-deoxy-D-manno-octulosonate from D-ribulose 5-phosphate: step 2/3. The protein operates within bacterial outer membrane biogenesis; lipopolysaccharide biosynthesis. The chain is 2-dehydro-3-deoxyphosphooctonate aldolase from Vesicomyosocius okutanii subsp. Calyptogena okutanii (strain HA).